The primary structure comprises 574 residues: Cholinesterase (574 aa).

An N-linked (GlcNAc...) asparagine glycan is attached at Asn57. An intrachain disulfide couples Cys65 to Cys92. N-linked (GlcNAc...) asparagine glycosylation occurs at Asn106. 116–117 contacts substrate; that stretch reads GG. Ser198 acts as the Acyl-ester intermediate in catalysis. Ser198 carries the post-translational modification Phosphoserine. Asn241 and Asn256 each carry an N-linked (GlcNAc...) asparagine glycan. Cys252 and Cys263 are joined by a disulfide. The active-site Charge relay system is the Glu325. N-linked (GlcNAc...) asparagine glycosylation is present at Asn341. A disulfide bond links Cys400 and Cys519. Residue His438 is the Charge relay system of the active site. N-linked (GlcNAc...) asparagine glycosylation is found at Asn455, Asn481, and Asn486.

The protein belongs to the type-B carboxylesterase/lipase family. In terms of assembly, homotetramer; disulfide-linked. Dimer of dimers. As to expression, detected in blood plasma (at protein level). Present in most cells except erythrocytes.

The protein resides in the secreted. The catalysed reaction is an acylcholine + H2O = a carboxylate + choline + H(+). Functionally, esterase with broad substrate specificity. Contributes to the inactivation of the neurotransmitter acetylcholine. Can degrade neurotoxic organophosphate esters. The protein is Cholinesterase (BCHE) of Equus caballus (Horse).